A 300-amino-acid chain; its full sequence is Protoheme IX farnesyltransferase (300 aa).

9 helical membrane passes run 24–44, 48–68, 94–114, 118–138, 146–166, 172–192, 217–237, 239–259, and 278–298; these read VTQL…PGMV, VLLG…AINC, LQIL…LYTF, LTMW…TLLL, IVIG…AVTG, AWIL…VLAL, LHIL…FISG, SGAV…AYAW, and IVYL…RPVI.

Belongs to the UbiA prenyltransferase family. Protoheme IX farnesyltransferase subfamily.

The protein resides in the cell inner membrane. It carries out the reaction heme b + (2E,6E)-farnesyl diphosphate + H2O = Fe(II)-heme o + diphosphate. Its pathway is porphyrin-containing compound metabolism; heme O biosynthesis; heme O from protoheme: step 1/1. In terms of biological role, converts heme B (protoheme IX) to heme O by substitution of the vinyl group on carbon 2 of heme B porphyrin ring with a hydroxyethyl farnesyl side group. The chain is Protoheme IX farnesyltransferase from Burkholderia pseudomallei (strain 1106a).